Reading from the N-terminus, the 655-residue chain is p-hydroxybenzoic acid efflux pump subunit AaeB (655 aa).

11 helical membrane passes run 13–33 (FAVKLATAIVLALFVGFHFQL), 38–58 (WAVLTAAIVAAGPAFAAGGEP), 69–89 (LRIIGTFIGCIAGLVIIIAMI), 93–113 (LLMILVCCIWAGFCTWISSLV), 121–141 (WGLAGYTALIIVITIQPEPLL), 152–172 (EIVIGIVCAIIADLLFSPRSI), 370–390 (LFWLWTGWTSGSGAMVMIAVV), 407–427 (FIYGTLAALPLGLLYFLVIIP), 431–451 (QSMLLLCISLAVLGFFLGIEV), 455–475 (LLGSMGALASTINIIVLDNPM), and 482–502 (FLDSALGQIVGCVLAFTVILL).

Belongs to the aromatic acid exporter ArAE (TC 2.A.85) family.

The protein localises to the cell inner membrane. Forms an efflux pump with AaeA. Could function as a metabolic relief valve, allowing to eliminate certain compounds when they accumulate to high levels in the cell. This chain is p-hydroxybenzoic acid efflux pump subunit AaeB, found in Shigella boydii serotype 4 (strain Sb227).